Reading from the N-terminus, the 613-residue chain is MSHFPKLLSSQIAFDVARTMLDGFDKHYRLFREVSHQAKLKFEAGDWHGLQQIQRDRIAFYNERVRESSVILEDEYDAENIEDEIWQQIKLHYIGLLTNHHQPELAETFFNSVCTRILHRSYFNNDFIFVRPAISTEYIENEESPTRPTFRAYYPGSREGMAACFERVVHNFQLESPFEDLQRDIGYVVRAVSEHFGDLRIAPNFQVHTLSSLFFRNKSAFIIGRILNGDRTFPLAIPIVHGPSGKLTLDTVLLKKEQLLILFSFTHSYFMVDMEIPSAYVTFLRDIMPRKPRAEIYTSLGLQKQGKNLFYRDFLHHLQHSSDKFIVAPGIRGLVMLVFTLPSYPYVFKVIKDFFPAPKETTRELVKSKYQLVKQHDRVGRMADTLEYSDVAFPLSRFDEALVREFEQHAPSMIEYQRGKDGGEEIVVRHVYIERRMTPLNIYLTEGTDEQVEHGVIEYGNAVKELIAANIFPGDMLYKNFGVTRHGRVVFYDYDEIEYLTDCNIRDVPQPRNEEEEMSGEVWYTVRPHDIFPETFRTFLLGDTRVRAAFLRHHADFFDPAMWQSHKDRLLAGHVHDFFAYHSSERFIHRYSEAGSAQGTAAVPDPGPARRVA.

ATP contacts are provided by residues 328 to 334 and Lys-349; that span reads APGIRGL. Asp-384 is a catalytic residue.

Belongs to the AceK family.

Its subcellular location is the cytoplasm. The enzyme catalyses L-seryl-[isocitrate dehydrogenase] + ATP = O-phospho-L-seryl-[isocitrate dehydrogenase] + ADP + H(+). Bifunctional enzyme which can phosphorylate or dephosphorylate isocitrate dehydrogenase (IDH) on a specific serine residue. This is a regulatory mechanism which enables bacteria to bypass the Krebs cycle via the glyoxylate shunt in response to the source of carbon. When bacteria are grown on glucose, IDH is fully active and unphosphorylated, but when grown on acetate or ethanol, the activity of IDH declines drastically concomitant with its phosphorylation. The sequence is that of Isocitrate dehydrogenase kinase/phosphatase from Cupriavidus necator (strain ATCC 17699 / DSM 428 / KCTC 22496 / NCIMB 10442 / H16 / Stanier 337) (Ralstonia eutropha).